The chain runs to 303 residues: Lipoyl synthase (303 aa).

The [4Fe-4S] cluster site is built by Cys40, Cys45, Cys51, Cys67, Cys71, Cys74, and Ser280. The 217-residue stretch at 53-269 folds into the Radical SAM core domain; the sequence is AVRKTATFMI…KEIALSKGFS (217 aa).

The protein belongs to the radical SAM superfamily. Lipoyl synthase family. The cofactor is [4Fe-4S] cluster.

The protein resides in the cytoplasm. It carries out the reaction [[Fe-S] cluster scaffold protein carrying a second [4Fe-4S](2+) cluster] + N(6)-octanoyl-L-lysyl-[protein] + 2 oxidized [2Fe-2S]-[ferredoxin] + 2 S-adenosyl-L-methionine + 4 H(+) = [[Fe-S] cluster scaffold protein] + N(6)-[(R)-dihydrolipoyl]-L-lysyl-[protein] + 4 Fe(3+) + 2 hydrogen sulfide + 2 5'-deoxyadenosine + 2 L-methionine + 2 reduced [2Fe-2S]-[ferredoxin]. It participates in protein modification; protein lipoylation via endogenous pathway; protein N(6)-(lipoyl)lysine from octanoyl-[acyl-carrier-protein]. In terms of biological role, catalyzes the radical-mediated insertion of two sulfur atoms into the C-6 and C-8 positions of the octanoyl moiety bound to the lipoyl domains of lipoate-dependent enzymes, thereby converting the octanoylated domains into lipoylated derivatives. This is Lipoyl synthase from Halalkalibacterium halodurans (strain ATCC BAA-125 / DSM 18197 / FERM 7344 / JCM 9153 / C-125) (Bacillus halodurans).